The following is a 410-amino-acid chain: Mating-type locus allele B5 protein (410 aa).

The interval 1 to 110 (MSSDPNFSLT…FNVVSPAVVC (110 aa)) is variable domain between B alleles. The homeobox; TALE-type DNA-binding region spans 107 to 184 (AVVCRNLSED…NARRRSGWSH (78 aa)). Residues 111–410 (RNLSEDLPAY…PFLCLSVAFV (300 aa)) are highly conserved between B alleles. Disordered regions lie at residues 201 to 241 (VRAK…TPAD), 275 to 336 (NKKT…PELS), and 366 to 395 (ILQS…PDEV). The segment covering 206–222 (SSSNQSTPPSPTSEYPS) has biased composition (low complexity). The Nuclear localization signal signature appears at 276-308 (KKTPKPGMPRPVTTVTKRQPARKTKPAAKPKSR). The span at 294–307 (QPARKTKPAAKPKS) shows a compositional bias: basic residues. Residues 312-336 (PRASTTPSIDSTLDSSKLESTPELS) show a composition bias toward polar residues. The interval 333–410 (PELSMCSTAD…PFLCLSVAFV (78 aa)) is not essential for B5 function. Positions 375–388 (RGNRKVKALPKRAG) are enriched in basic residues.

Belongs to the TALE/M-ATYP homeobox family.

Its subcellular location is the nucleus. Functionally, the B locus has at least 25 alleles, and any combination of two different B alleles yields a multimeric regulatory protein, that activates genes responsible for the pathogenicity and for the sexual development of the fungus within the corn plant. The chain is Mating-type locus allele B5 protein from Mycosarcoma maydis (Corn smut fungus).